The sequence spans 327 residues: GMP reductase (327 aa).

The Thioimidate intermediate role is filled by C176. An NADP(+)-binding site is contributed by 205-228 (IIADGGIRTHGDIVKSIRFGATMV).

It belongs to the IMPDH/GMPR family. GuaC type 2 subfamily.

The enzyme catalyses IMP + NH4(+) + NADP(+) = GMP + NADPH + 2 H(+). Its function is as follows. Catalyzes the irreversible NADPH-dependent deamination of GMP to IMP. It functions in the conversion of nucleobase, nucleoside and nucleotide derivatives of G to A nucleotides, and in maintaining the intracellular balance of A and G nucleotides. The polypeptide is GMP reductase (Helicobacter pylori (strain ATCC 700392 / 26695) (Campylobacter pylori)).